A 205-amino-acid polypeptide reads, in one-letter code: Guanylate kinase (205 aa).

Residues 6–184 (GLLLVVSGPS…SAKEIEGIIS (179 aa)) form the Guanylate kinase-like domain. 13–20 (GPSGAGKG) contributes to the ATP binding site.

It belongs to the guanylate kinase family.

The protein localises to the cytoplasm. It carries out the reaction GMP + ATP = GDP + ADP. In terms of biological role, essential for recycling GMP and indirectly, cGMP. This Clostridioides difficile (strain 630) (Peptoclostridium difficile) protein is Guanylate kinase.